The chain runs to 263 residues: Small ribosomal subunit protein eS4 (263 aa).

One can recognise an S4 RNA-binding domain in the interval 42–104; it reads LPLVIFLRNR…TNELFRLIYD (63 aa).

Belongs to the eukaryotic ribosomal protein eS4 family.

The polypeptide is Small ribosomal subunit protein eS4 (RpS4) (Spodoptera frugiperda (Fall armyworm)).